A 289-amino-acid chain; its full sequence is MITGKTKLLGVIGHPVEHSLSPVMHNAAIAQLGLDYVYLPFPIAPDNLEAAIALLATIGVVGFSVTIPHKQAIIPLLSEISPVAQAIGAVNTVTRQNNQWVGTNTDIEGFIAPLQTTYKRDWSQQIAVILGNGGAARAVVAGCYQLGFAEIHVVGRNVQRLEEFRHSWENSPIAENLQVHTWDYLAKLIPQANLLVNTTPIGMYPQVDESPLSAEELVNLQTGTIAYDLIYIPKPTQFLQKAQQQGAIIIDGLEMLVQQGVAALKIWLQQDDIPVDVMRQALIKHLGLK.

Shikimate is bound by residues Ser-19–Ser-21 and Thr-66. Lys-70 functions as the Proton acceptor in the catalytic mechanism. Shikimate contacts are provided by Asn-91 and Asp-106. NADP(+) contacts are provided by residues Gly-131–Ala-135 and Leu-229. Tyr-231 is a binding site for shikimate. An NADP(+)-binding site is contributed by Gly-252.

The protein belongs to the shikimate dehydrogenase family. In terms of assembly, homodimer.

The enzyme catalyses shikimate + NADP(+) = 3-dehydroshikimate + NADPH + H(+). The protein operates within metabolic intermediate biosynthesis; chorismate biosynthesis; chorismate from D-erythrose 4-phosphate and phosphoenolpyruvate: step 4/7. Functionally, involved in the biosynthesis of the chorismate, which leads to the biosynthesis of aromatic amino acids. Catalyzes the reversible NADPH linked reduction of 3-dehydroshikimate (DHSA) to yield shikimate (SA). In Nostoc sp. (strain PCC 7120 / SAG 25.82 / UTEX 2576), this protein is Shikimate dehydrogenase (NADP(+)).